Here is a 54-residue protein sequence, read N- to C-terminus: Lectin alpha chain (54 aa).

Belongs to the leguminous lectin family. Tetramer of two alpha and two beta chains.

This chain is Lectin alpha chain, found in Lathyrus odoratus (Sweet pea).